The following is a 139-amino-acid chain: Ribosomal RNA large subunit methyltransferase H (139 aa).

S-adenosyl-L-methionine is bound by residues L57, G88, and 107 to 112 (LSAMTF).

It belongs to the RNA methyltransferase RlmH family. In terms of assembly, homodimer.

It localises to the cytoplasm. It carries out the reaction pseudouridine(1915) in 23S rRNA + S-adenosyl-L-methionine = N(3)-methylpseudouridine(1915) in 23S rRNA + S-adenosyl-L-homocysteine + H(+). Its function is as follows. Specifically methylates the pseudouridine at position 1915 (m3Psi1915) in 23S rRNA. This is Ribosomal RNA large subunit methyltransferase H from Solibacter usitatus (strain Ellin6076).